A 220-amino-acid polypeptide reads, in one-letter code: MTATTETAPVAPPAEPAAAKKTKKQQPKKVAGGAKAKKPSGPSASELIVKAVSSSKERSGVSLAALKKALAAGGYDVDKNNSRLKLALKALVTKGTLTQVKGSGASGSFKLNKKQLETKDKAAKKKPAAPKAKKTAAGAKKAPKSPKKPKKVSAAAKSPKKVKKLAKAAKSPKKPKAVKAKKVAKSPAKKATKPKTAKSPAKAKVAKPKAAKAKKPAPKK.

Disordered stretches follow at residues 1–45 and 99–220; these read MTAT…PSAS and QVKG…APKK. A compositionally biased stretch (low complexity) spans 28–45; sequence KKVAGGAKAKKPSGPSAS. Positions 40 to 113 constitute an H15 domain; the sequence is SGPSASELIV…GASGSFKLNK (74 aa). Composition is skewed to basic residues over residues 122-134, 141-151, 158-196, and 204-220; these read AAKKKPAAPKAKK, KAPKSPKKPKK, SPKKVKKLAKAAKSPKKPKAVKAKKVAKSPAKKATKPKT, and KVAKPKAAKAKKPAPKK.

The protein belongs to the histone H1/H5 family.

The protein localises to the nucleus. It is found in the chromosome. Functionally, histones H1 are necessary for the condensation of nucleosome chains into higher-order structures. The sequence is that of Histone H1B from Xenopus laevis (African clawed frog).